We begin with the raw amino-acid sequence, 247 residues long: Carboxy-S-adenosyl-L-methionine synthase (247 aa).

S-adenosyl-L-methionine-binding positions include Tyr39, 64-66 (GCS), 117-118 (DI), Asn132, and Arg199.

The protein belongs to the class I-like SAM-binding methyltransferase superfamily. Cx-SAM synthase family. As to quaternary structure, homodimer.

It catalyses the reaction prephenate + S-adenosyl-L-methionine = carboxy-S-adenosyl-L-methionine + 3-phenylpyruvate + H2O. Its function is as follows. Catalyzes the conversion of S-adenosyl-L-methionine (SAM) to carboxy-S-adenosyl-L-methionine (Cx-SAM). The sequence is that of Carboxy-S-adenosyl-L-methionine synthase from Aeromonas salmonicida (strain A449).